The sequence spans 84 residues: MAITMRTLVAFVFTIFFIISFVHSRTTTSGYGMLFDSVACEGGFEYCPRGGGNDKCTTFCRSLPNKYDFGVCDKIYACCCHINV.

The signal sequence occupies residues 1–24; sequence MAITMRTLVAFVFTIFFIISFVHS. 4 cysteine pairs are disulfide-bonded: Cys40/Cys80, Cys47/Cys72, Cys56/Cys78, and Cys60/Cys79.

Belongs to the DEFL family.

It localises to the secreted. The chain is Defensin-like protein 199 from Arabidopsis thaliana (Mouse-ear cress).